Reading from the N-terminus, the 128-residue chain is Large ribosomal subunit protein bL19 (128 aa).

The protein belongs to the bacterial ribosomal protein bL19 family.

In terms of biological role, this protein is located at the 30S-50S ribosomal subunit interface and may play a role in the structure and function of the aminoacyl-tRNA binding site. The protein is Large ribosomal subunit protein bL19 of Mesoplasma florum (strain ATCC 33453 / NBRC 100688 / NCTC 11704 / L1) (Acholeplasma florum).